Reading from the N-terminus, the 300-residue chain is tRNA uridine(34) hydroxylase (300 aa).

The Rhodanese domain occupies 128–222; it reads ADPEVIVVDT…YLEDVPQAQS (95 aa). Residue cysteine 182 is the Cysteine persulfide intermediate of the active site.

This sequence belongs to the TrhO family.

The catalysed reaction is uridine(34) in tRNA + AH2 + O2 = 5-hydroxyuridine(34) in tRNA + A + H2O. Functionally, catalyzes oxygen-dependent 5-hydroxyuridine (ho5U) modification at position 34 in tRNAs. This is tRNA uridine(34) hydroxylase from Deinococcus radiodurans (strain ATCC 13939 / DSM 20539 / JCM 16871 / CCUG 27074 / LMG 4051 / NBRC 15346 / NCIMB 9279 / VKM B-1422 / R1).